Reading from the N-terminus, the 213-residue chain is Glycerol-3-phosphate acyltransferase (213 aa).

6 helical membrane-spanning segments follow: residues 4-24 (IILL…LWIG), 48-68 (ILGV…GTLA), 71-91 (LPLF…LAVI), 113-133 (VILG…IIVL), 144-164 (VIGA…GFIL), and 165-185 (TSYD…IILR).

The protein belongs to the PlsY family. As to quaternary structure, probably interacts with PlsX.

Its subcellular location is the cell membrane. It carries out the reaction an acyl phosphate + sn-glycerol 3-phosphate = a 1-acyl-sn-glycero-3-phosphate + phosphate. It functions in the pathway lipid metabolism; phospholipid metabolism. In terms of biological role, catalyzes the transfer of an acyl group from acyl-phosphate (acyl-PO(4)) to glycerol-3-phosphate (G3P) to form lysophosphatidic acid (LPA). This enzyme utilizes acyl-phosphate as fatty acyl donor, but not acyl-CoA or acyl-ACP. The protein is Glycerol-3-phosphate acyltransferase of Lactococcus lactis subsp. lactis (strain IL1403) (Streptococcus lactis).